A 442-amino-acid chain; its full sequence is Cyclic 2,3-diphosphoglycerate synthetase (442 aa).

This sequence belongs to the cyclic 2,3-diphosphoglycerate synthetase family.

Its subcellular location is the cytoplasm. The catalysed reaction is (2R)-2,3-bisphosphoglycerate + ATP + H(+) = cyclic (2R)-2,3-bisphosphoglycerate + ADP + phosphate. Functionally, catalyzes the formation of cyclic 2,3-diphosphoglycerate (cDPG) by formation of an intramolecular phosphoanhydride bond at the expense of ATP. This is Cyclic 2,3-diphosphoglycerate synthetase from Rubrobacter xylanophilus (strain DSM 9941 / JCM 11954 / NBRC 16129 / PRD-1).